A 702-amino-acid polypeptide reads, in one-letter code: MPSDILVVAALGRPFTLGALYDARKDKLYPGFTLWEHEVLEESTVESDQPSSTFEITASDSIDDKSSLMDIEASLKASFLGGLIEVGGSAKYLNDTKKFKNQSRVTLQYKATTSFKQLMTNLETKHVEYSEYFQNIEATHVVIGILYGANAFFVFDSDKVDSSNVQDIQGSMEAVIKKIPSVEISGQGSVQLTSEESDITNSFSCKFHGDFHLPSNPTTFEDAVKTYQQLPQMMGKETAVPMTVWLVPMTNFYSEAPQLMADSSTPILRKVRNTLEAMRQLDMRCNDSLERRHSEAGFHCLKKKLKTFQKHYERLHVNPFRKNHFPETFSPSGKGTKMKLQCLPTFRNKLRSPSNINSLNMWMDCAEREINVLRSCIDIIEEAKHKVVLSKSQMARELDDSEVKHAVCYVFTYVTDYDPFLNALSDFSKSIKPKKYSPSKKDYWYTSDDVPEMMREKAHHFYNLAKDMENRCVRFLVASIVNPKEEGAAIHYYREGIQIINDFSNPRIPPVETIQDQESYSGMTVSSPWKETAHPALHLSEGNKKAMSGKPQPSDNNPKRFDHYQQVLCNKGLSKRHYWEVEWCGYVRAGITYKGIQRKTFASECSLGHTDMSWVFDYYPKSGYHHIYNNKKVRVKVASPGFDRLGVYLDWPAGTLSFYMVTSTWVTHLHTFSIRFNEAVYPAFLIGHGQKNANGQIKLKGE.

The segment at 2–264 is structural MACPF/CDC pore-forming domain; that stretch reads PSDILVVAAL…EAPQLMADSS (263 aa). Asn94, Asn101, and Asn286 each carry an N-linked (GlcNAc...) asparagine glycan. Residues 265-387 form a structural FAT domain region; that stretch reads TPILRKVRNT…DIIEEAKHKV (123 aa). Positions 388-515 are thioredoxin (THX) domain; that stretch reads VLSKSQMARE…PRIPPVETIQ (128 aa). The region spanning 504–702 is the B30.2/SPRY domain; it reads SNPRIPPVET…ANGQIKLKGE (199 aa).

It belongs to the SNTX/VTX toxin family. In terms of assembly, heterodimer of alpha and beta subunits; non-covalently linked. Also associates into tetramers or even higher aggregates. Intrachain disulfide bonds may be present in the heterodimer. As to expression, expressed by the venom gland.

The protein localises to the secreted. This heterodimer induces potent hemolytic activities (when tested on rabbit erythrocytes, EC(50)=25-56 ng/mL) due to its ability to form pores in the cell membrane. The pore may be composed of 10 alpha/beta heterodimers. The toxin shows cardiovascular effects that include a vasorelaxant action that may involve the L-arginine-nitric oxid synthase pathway. In addition, it displays edema-inducing activities, increases vascular permeability. It also shows myotoxic activities and interferes irreversibly with neuromuscular function. It also induces irreversible platelet aggregation in rabbit or rat (but not in human or mouse) whole blood. In addition, it has been observed to increase spontaneous quantal acetylcholine release from isolated frog cutaneous pectoris motor endings. This is Cytolytic toxin-beta from Scorpaena plumieri (Spotted scorpionfish).